Reading from the N-terminus, the 247-residue chain is PF03932 family protein CutC (247 aa).

Belongs to the CutC family.

The protein localises to the cytoplasm. In Vibrio campbellii (strain ATCC BAA-1116), this protein is PF03932 family protein CutC.